We begin with the raw amino-acid sequence, 365 residues long: 3-dehydroquinate synthase (365 aa).

NAD(+) is bound by residues 106–110 (GVIGD), 130–131 (TT), Lys-142, Lys-151, and 169–172 (FFAT). Zn(2+) contacts are provided by Glu-184, His-247, and His-264.

Belongs to the sugar phosphate cyclases superfamily. Dehydroquinate synthase family. NAD(+) is required as a cofactor. Requires Co(2+) as cofactor. Zn(2+) serves as cofactor.

Its subcellular location is the cytoplasm. It catalyses the reaction 7-phospho-2-dehydro-3-deoxy-D-arabino-heptonate = 3-dehydroquinate + phosphate. Its pathway is metabolic intermediate biosynthesis; chorismate biosynthesis; chorismate from D-erythrose 4-phosphate and phosphoenolpyruvate: step 2/7. Its function is as follows. Catalyzes the conversion of 3-deoxy-D-arabino-heptulosonate 7-phosphate (DAHP) to dehydroquinate (DHQ). The sequence is that of 3-dehydroquinate synthase from Listeria monocytogenes serotype 4b (strain F2365).